Here is an 884-residue protein sequence, read N- to C-terminus: Translation initiation factor IF-2 (884 aa).

The segment at 58-248 is disordered; that stretch reads PEKVEQKRVR…GKTESVETEE (191 aa). Basic residues predominate over residues 66-77; that stretch reads VRSNVIRKRRQP. Low complexity predominate over residues 87 to 106; sequence EAPAAQAPEAEEVTAPTAEE. The segment covering 172-183 has biased composition (basic residues); it reads SRKKAKAKKHQA. Residues 207-223 are compositionally biased toward low complexity; that stretch reads DTAPADSPAAPAAATPA. Positions 229–239 are enriched in basic residues; the sequence is KPSRKDRKKRG. One can recognise a tr-type G domain in the interval 384-553; the sequence is KRAPVVTIMG…LLQAEMLELK (170 aa). The segment at 393-400 is G1; that stretch reads GHVDHGKT. 393 to 400 contacts GTP; sequence GHVDHGKT. The segment at 418-422 is G2; the sequence is GITQH. The segment at 439-442 is G3; it reads DTPG. GTP is bound by residues 439–443 and 493–496; these read DTPGH and NKID. The G4 stretch occupies residues 493 to 496; the sequence is NKID. Positions 529 to 531 are G5; that stretch reads SAK.

It belongs to the TRAFAC class translation factor GTPase superfamily. Classic translation factor GTPase family. IF-2 subfamily.

It localises to the cytoplasm. In terms of biological role, one of the essential components for the initiation of protein synthesis. Protects formylmethionyl-tRNA from spontaneous hydrolysis and promotes its binding to the 30S ribosomal subunits. Also involved in the hydrolysis of GTP during the formation of the 70S ribosomal complex. The chain is Translation initiation factor IF-2 from Desulfosudis oleivorans (strain DSM 6200 / JCM 39069 / Hxd3) (Desulfococcus oleovorans).